Consider the following 401-residue polypeptide: Adenylosuccinate synthetase (401 aa).

GTP is bound by residues Gly-11 to Lys-17 and Gly-39 to Thr-41. Residue Asp-12 is the Proton acceptor of the active site. The Mg(2+) site is built by Asp-12 and Gly-39. Residues Asp-12 to Lys-15, Asn-37 to His-40, Thr-127, Arg-141, Gln-212, Thr-227, and Arg-290 contribute to the IMP site. His-40 (proton donor) is an active-site residue. A substrate-binding site is contributed by Ala-286 to Arg-292. Residues Arg-292, Lys-318–Asp-320, and Ser-390–Gly-392 contribute to the GTP site.

Belongs to the adenylosuccinate synthetase family. As to quaternary structure, homodimer. Mg(2+) is required as a cofactor.

Its subcellular location is the cytoplasm. It catalyses the reaction IMP + L-aspartate + GTP = N(6)-(1,2-dicarboxyethyl)-AMP + GDP + phosphate + 2 H(+). Its pathway is purine metabolism; AMP biosynthesis via de novo pathway; AMP from IMP: step 1/2. Functionally, plays an important role in the de novo pathway of purine nucleotide biosynthesis. Catalyzes the first committed step in the biosynthesis of AMP from IMP. The polypeptide is Adenylosuccinate synthetase (Thermosipho africanus (strain TCF52B)).